The sequence spans 274 residues: tRNA-cytidine(32) 2-sulfurtransferase (274 aa).

Residues 40–45 (SGGKDS) carry the PP-loop motif motif. [4Fe-4S] cluster contacts are provided by Cys115, Cys118, and Cys206.

It belongs to the TtcA family. Homodimer. The cofactor is Mg(2+). [4Fe-4S] cluster serves as cofactor.

It is found in the cytoplasm. The enzyme catalyses cytidine(32) in tRNA + S-sulfanyl-L-cysteinyl-[cysteine desulfurase] + AH2 + ATP = 2-thiocytidine(32) in tRNA + L-cysteinyl-[cysteine desulfurase] + A + AMP + diphosphate + H(+). The protein operates within tRNA modification. In terms of biological role, catalyzes the ATP-dependent 2-thiolation of cytidine in position 32 of tRNA, to form 2-thiocytidine (s(2)C32). The sulfur atoms are provided by the cysteine/cysteine desulfurase (IscS) system. In Pseudomonas putida (strain ATCC 700007 / DSM 6899 / JCM 31910 / BCRC 17059 / LMG 24140 / F1), this protein is tRNA-cytidine(32) 2-sulfurtransferase.